Reading from the N-terminus, the 215-residue chain is Large ribosomal subunit protein uL3 (215 aa).

Glutamine 151 is modified (N5-methylglutamine).

The protein belongs to the universal ribosomal protein uL3 family. As to quaternary structure, part of the 50S ribosomal subunit. Forms a cluster with proteins L14 and L19. In terms of processing, methylated by PrmB.

Functionally, one of the primary rRNA binding proteins, it binds directly near the 3'-end of the 23S rRNA, where it nucleates assembly of the 50S subunit. This Rickettsia massiliae (strain Mtu5) protein is Large ribosomal subunit protein uL3.